We begin with the raw amino-acid sequence, 379 residues long: MDWQTERGQVLDSARRVVIKVGSAVLTSGNGLDVGVVDNLVAQIADLHGRGVDVVLVSSGAVSAGRAVLRRCCEIKGMPHKQAASAVGQSRLMHYYDEAFGRHGIISAQILLTKDDLRSRHRFLNARNTFAALMDWHAVPIVNENDTVAVRELEFGDNDSLASLLLNVVDADLFINLTSAGGVYADNPDTNPDARVMECIENVHGLNLDVMCGGKTAVGSGGMYSKLLAARRAAQLGVPTLILPGRKPDAMLRAFAGDEPGTWVRPEKKTVSARKFWLAYHADPTGSVVVDDGAVKALEAGKSLLPAGIIGVEGGFGRGALVRVTSAAGAVVAVGLSNYPAADLRRIMGHRTAELTAILGDNQYPEAIHRDNMLMDAVV.

Lys20 provides a ligand contact to ATP. Ser59, Asp146, and Asn158 together coordinate substrate. Residue 220–226 coordinates ATP; that stretch reads SGGMYSK. In terms of domain architecture, PUA spans 285–362; sequence TGSVVVDDGA…AELTAILGDN (78 aa).

The protein belongs to the glutamate 5-kinase family.

The protein resides in the cytoplasm. It catalyses the reaction L-glutamate + ATP = L-glutamyl 5-phosphate + ADP. Its pathway is amino-acid biosynthesis; L-proline biosynthesis; L-glutamate 5-semialdehyde from L-glutamate: step 1/2. Its function is as follows. Catalyzes the transfer of a phosphate group to glutamate to form L-glutamate 5-phosphate. The chain is Glutamate 5-kinase from Oleidesulfovibrio alaskensis (strain ATCC BAA-1058 / DSM 17464 / G20) (Desulfovibrio alaskensis).